Here is a 164-residue protein sequence, read N- to C-terminus: UPF0178 protein BRADO3147 (164 aa).

It belongs to the UPF0178 family.

In Bradyrhizobium sp. (strain ORS 278), this protein is UPF0178 protein BRADO3147.